The following is a 79-amino-acid chain: Aquaporin Z (79 aa).

2 helical membrane-spanning segments follow: residues 4 to 24 (LFAE…SAVF) and 33 to 53 (IGFA…AYAV). Residues 62-64 (NPA) carry the NPA 1 motif.

This sequence belongs to the MIP/aquaporin (TC 1.A.8) family. In terms of assembly, homotetramer.

Its subcellular location is the cell membrane. The catalysed reaction is H2O(in) = H2O(out). Functionally, channel that permits osmotically driven movement of water in both directions. It is involved in the osmoregulation and in the maintenance of cell turgor during volume expansion in rapidly growing cells. It mediates rapid entry or exit of water in response to abrupt changes in osmolarity. The protein is Aquaporin Z of Flavobacterium johnsoniae (Cytophaga johnsonae).